We begin with the raw amino-acid sequence, 134 residues long: Late embryogenesis abundant protein 6 (134 aa).

Residues 31-45 show a composition bias toward basic and acidic residues; the sequence is ERAMARTKEEKEIAH. Disordered stretches follow at residues 31-53 and 80-134; these read ERAMARTKEEKEIAHQRRKAKEA and VTDH…HHHY. A coiled-coil region spans residues 34 to 70; the sequence is MARTKEEKEIAHQRRKAKEAEANMDMHMAKAAHAEDK. Positions 115–127 are enriched in low complexity; the sequence is PPQTYHPTYPPTG.

Belongs to the LEA type 1 family.

Functionally, involved dehydration tolerance. Involved in the adaptive response of vascular plants to withstand water deficit. May possess chaperone-like activity under water deficit. This chain is Late embryogenesis abundant protein 6, found in Arabidopsis thaliana (Mouse-ear cress).